The chain runs to 267 residues: Enolase-phosphatase E1 (267 aa).

The Mg(2+) site is built by aspartate 11 and glutamate 13. Residues 155 to 156 and lysine 189 each bind substrate; that span reads SS. Aspartate 215 provides a ligand contact to Mg(2+).

Belongs to the HAD-like hydrolase superfamily. MasA/MtnC family. As to quaternary structure, monomer. Mg(2+) is required as a cofactor.

It is found in the cytoplasm. The protein resides in the nucleus. It catalyses the reaction 5-methylsulfanyl-2,3-dioxopentyl phosphate + H2O = 1,2-dihydroxy-5-(methylsulfanyl)pent-1-en-3-one + phosphate. It participates in amino-acid biosynthesis; L-methionine biosynthesis via salvage pathway; L-methionine from S-methyl-5-thio-alpha-D-ribose 1-phosphate: step 3/6. The protein operates within amino-acid biosynthesis; L-methionine biosynthesis via salvage pathway; L-methionine from S-methyl-5-thio-alpha-D-ribose 1-phosphate: step 4/6. In terms of biological role, bifunctional enzyme that catalyzes the enolization of 2,3-diketo-5-methylthiopentyl-1-phosphate (DK-MTP-1-P) into the intermediate 2-hydroxy-3-keto-5-methylthiopentenyl-1-phosphate (HK-MTPenyl-1-P), which is then dephosphorylated to form the acireductone 1,2-dihydroxy-3-keto-5-methylthiopentene (DHK-MTPene). The polypeptide is Enolase-phosphatase E1 (enoph1) (Dictyostelium discoideum (Social amoeba)).